We begin with the raw amino-acid sequence, 489 residues long: Ketol-acid reductoisomerase (NADP(+)) (489 aa).

The region spanning 16-207 (LRKCKLVEKN…GSHRAGVLHS (192 aa)) is the KARI N-terminal Rossmann domain. NADP(+) is bound by residues 44-47 (CGSQ), Arg67, Ser77, and 107-109 (DKQ). His131 is a catalytic residue. NADP(+) is bound at residue Gly157. KARI C-terminal knotted domains follow at residues 208 to 343 (SFIA…KCKI) and 344 to 483 (CHKE…MVDM). 4 residues coordinate Mg(2+): Asp216, Glu220, Glu388, and Glu392. Substrate is bound at residue Ser413.

Belongs to the ketol-acid reductoisomerase family. Mg(2+) is required as a cofactor.

The enzyme catalyses (2R)-2,3-dihydroxy-3-methylbutanoate + NADP(+) = (2S)-2-acetolactate + NADPH + H(+). The catalysed reaction is (2R,3R)-2,3-dihydroxy-3-methylpentanoate + NADP(+) = (S)-2-ethyl-2-hydroxy-3-oxobutanoate + NADPH + H(+). The protein operates within amino-acid biosynthesis; L-isoleucine biosynthesis; L-isoleucine from 2-oxobutanoate: step 2/4. Its pathway is amino-acid biosynthesis; L-valine biosynthesis; L-valine from pyruvate: step 2/4. Its function is as follows. Involved in the biosynthesis of branched-chain amino acids (BCAA). Catalyzes an alkyl-migration followed by a ketol-acid reduction of (S)-2-acetolactate (S2AL) to yield (R)-2,3-dihydroxy-isovalerate. In the isomerase reaction, S2AL is rearranged via a Mg-dependent methyl migration to produce 3-hydroxy-3-methyl-2-ketobutyrate (HMKB). In the reductase reaction, this 2-ketoacid undergoes a metal-dependent reduction by NADPH to yield (R)-2,3-dihydroxy-isovalerate. The chain is Ketol-acid reductoisomerase (NADP(+)) from Buchnera aphidicola subsp. Schlechtendalia chinensis.